Consider the following 313-residue polypeptide: S-methyl-5'-thioadenosine phosphorylase (313 aa).

Phosphate-binding positions include threonine 20, 68 to 69 (RH), and 101 to 102 (SA). Methionine 203 is a binding site for substrate. Serine 204 contributes to the phosphate binding site. 227–229 (DYD) contacts substrate.

The protein belongs to the PNP/MTAP phosphorylase family. MTAP subfamily. In terms of assembly, homotrimer.

Its subcellular location is the cytoplasm. It is found in the nucleus. It carries out the reaction S-methyl-5'-thioadenosine + phosphate = 5-(methylsulfanyl)-alpha-D-ribose 1-phosphate + adenine. The protein operates within amino-acid biosynthesis; L-methionine biosynthesis via salvage pathway; S-methyl-5-thio-alpha-D-ribose 1-phosphate from S-methyl-5'-thioadenosine (phosphorylase route): step 1/1. In terms of biological role, catalyzes the reversible phosphorylation of S-methyl-5'-thioadenosine (MTA) to adenine and 5-methylthioribose-1-phosphate. Involved in the breakdown of MTA, a major by-product of polyamine biosynthesis. Responsible for the first step in the methionine salvage pathway after MTA has been generated from S-adenosylmethionine. Has broad substrate specificity with 6-aminopurine nucleosides as preferred substrates. The protein is S-methyl-5'-thioadenosine phosphorylase of Ajellomyces capsulatus (strain G186AR / H82 / ATCC MYA-2454 / RMSCC 2432) (Darling's disease fungus).